The primary structure comprises 423 residues: Adenylosuccinate synthetase (423 aa).

Residues 12 to 18 (GDEGKGK) and 40 to 42 (GHT) each bind GTP. The active-site Proton acceptor is the Asp-13. Asp-13 and Gly-40 together coordinate Mg(2+). IMP contacts are provided by residues 13 to 16 (DEGK), 38 to 41 (NAGH), Thr-129, Arg-143, Gln-221, Thr-236, and Arg-300. Residue His-41 is the Proton donor of the active site. Residue 296–302 (AVTGRKR) coordinates substrate. Residues Arg-302, 328–330 (KSD), and 408–410 (SVG) contribute to the GTP site.

Belongs to the adenylosuccinate synthetase family. In terms of assembly, homodimer. Mg(2+) is required as a cofactor.

The protein resides in the cytoplasm. The catalysed reaction is IMP + L-aspartate + GTP = N(6)-(1,2-dicarboxyethyl)-AMP + GDP + phosphate + 2 H(+). It participates in purine metabolism; AMP biosynthesis via de novo pathway; AMP from IMP: step 1/2. Plays an important role in the de novo pathway of purine nucleotide biosynthesis. Catalyzes the first committed step in the biosynthesis of AMP from IMP. In Parabacteroides distasonis (strain ATCC 8503 / DSM 20701 / CIP 104284 / JCM 5825 / NCTC 11152), this protein is Adenylosuccinate synthetase.